We begin with the raw amino-acid sequence, 394 residues long: uncharacterized protein (394 aa).

The next 12 helical transmembrane spans lie at 13-35, 50-72, 79-97, 107-129, 136-158, 168-190, 218-240, 250-272, 277-299, 309-331, 344-366, and 371-393; these read AIIG…VPVL, VGVA…GWLS, LIIN…IAWS, GRGL…ELVL, IMGL…SPII, FLIN…PASL, INLS…PVEL, VPEI…CICF, VLYS…GIFL, ILGL…ALVN, AIYS…ILFS, and FEVL…LYLI.

It belongs to the major facilitator superfamily.

The protein localises to the cell membrane. This is an uncharacterized protein from Buchnera aphidicola subsp. Baizongia pistaciae (strain Bp).